Here is an 856-residue protein sequence, read N- to C-terminus: DNA gyrase subunit A (856 aa).

The region spanning 45–517 (LPDARDGLKP…DDGTVTHEDL (473 aa)) is the Topo IIA-type catalytic domain. Catalysis depends on Tyr133, which acts as the O-(5'-phospho-DNA)-tyrosine intermediate. A GyrA-box motif is present at residues 544-550 (QHRGGKG). The disordered stretch occupies residues 822-856 (TVASVDTHPRTDDSSEADSGDGESESENATATTPS). Residues 835 to 847 (SSEADSGDGESES) are compositionally biased toward acidic residues.

Belongs to the type II topoisomerase GyrA/ParC subunit family. Heterotetramer, composed of two GyrA and two GyrB chains. In the heterotetramer, GyrA contains the active site tyrosine that forms a transient covalent intermediate with DNA, while GyrB binds cofactors and catalyzes ATP hydrolysis.

The protein localises to the cytoplasm. The catalysed reaction is ATP-dependent breakage, passage and rejoining of double-stranded DNA.. Its function is as follows. A type II topoisomerase that negatively supercoils closed circular double-stranded (ds) DNA in an ATP-dependent manner to modulate DNA topology and maintain chromosomes in an underwound state. Negative supercoiling favors strand separation, and DNA replication, transcription, recombination and repair, all of which involve strand separation. Also able to catalyze the interconversion of other topological isomers of dsDNA rings, including catenanes and knotted rings. Type II topoisomerases break and join 2 DNA strands simultaneously in an ATP-dependent manner. This Haloquadratum walsbyi (strain DSM 16790 / HBSQ001) protein is DNA gyrase subunit A.